Here is a 118-residue protein sequence, read N- to C-terminus: UPF0102 protein Cphy_2398 (118 aa).

Belongs to the UPF0102 family.

The protein is UPF0102 protein Cphy_2398 of Lachnoclostridium phytofermentans (strain ATCC 700394 / DSM 18823 / ISDg) (Clostridium phytofermentans).